The sequence spans 190 residues: Xanthine phosphoribosyltransferase (190 aa).

L20 and N27 together coordinate xanthine. 128-132 (ANGKA) contributes to the 5-phospho-alpha-D-ribose 1-diphosphate binding site. K156 provides a ligand contact to xanthine.

The protein belongs to the purine/pyrimidine phosphoribosyltransferase family. Xpt subfamily. Homodimer.

The protein localises to the cytoplasm. The enzyme catalyses XMP + diphosphate = xanthine + 5-phospho-alpha-D-ribose 1-diphosphate. It functions in the pathway purine metabolism; XMP biosynthesis via salvage pathway; XMP from xanthine: step 1/1. Its function is as follows. Converts the preformed base xanthine, a product of nucleic acid breakdown, to xanthosine 5'-monophosphate (XMP), so it can be reused for RNA or DNA synthesis. This Finegoldia magna (strain ATCC 29328 / DSM 20472 / WAL 2508) (Peptostreptococcus magnus) protein is Xanthine phosphoribosyltransferase.